The sequence spans 254 residues: 3-deoxy-manno-octulosonate cytidylyltransferase (254 aa).

This sequence belongs to the KdsB family.

It localises to the cytoplasm. It carries out the reaction 3-deoxy-alpha-D-manno-oct-2-ulosonate + CTP = CMP-3-deoxy-beta-D-manno-octulosonate + diphosphate. The protein operates within nucleotide-sugar biosynthesis; CMP-3-deoxy-D-manno-octulosonate biosynthesis; CMP-3-deoxy-D-manno-octulosonate from 3-deoxy-D-manno-octulosonate and CTP: step 1/1. Its pathway is bacterial outer membrane biogenesis; lipopolysaccharide biosynthesis. In terms of biological role, activates KDO (a required 8-carbon sugar) for incorporation into bacterial lipopolysaccharide in Gram-negative bacteria. The protein is 3-deoxy-manno-octulosonate cytidylyltransferase of Polynucleobacter necessarius subsp. necessarius (strain STIR1).